The sequence spans 457 residues: Glutamate--tRNA ligase 1 (457 aa).

The short motif at 9 to 19 (PSPTGYIHIGN) is the 'HIGH' region element. The 'KMSKS' region motif lies at 250 to 254 (GLSKR). K253 contacts ATP.

Belongs to the class-I aminoacyl-tRNA synthetase family. Glutamate--tRNA ligase type 1 subfamily. Monomer.

The protein resides in the cytoplasm. It carries out the reaction tRNA(Glu) + L-glutamate + ATP = L-glutamyl-tRNA(Glu) + AMP + diphosphate. In terms of biological role, catalyzes the attachment of glutamate to tRNA(Glu) in a two-step reaction: glutamate is first activated by ATP to form Glu-AMP and then transferred to the acceptor end of tRNA(Glu). The sequence is that of Glutamate--tRNA ligase 1 from Brucella ovis (strain ATCC 25840 / 63/290 / NCTC 10512).